Here is a 582-residue protein sequence, read N- to C-terminus: Membrane protein insertase YidC (582 aa).

A helical membrane pass occupies residues 3–23 (IQRALVITGIAVVSYLMIQAW). A disordered region spans residues 38 to 92 (QVAEQGNSSSSDSADLPSVQSQTDNSIPSAQSDNDLPSVSPADIAQPTPSSQRIE). Positions 45–58 (SSSSDSADLPSVQS) are enriched in low complexity. A compositionally biased stretch (polar residues) spans 59 to 74 (QTDNSIPSAQSDNDLP). 5 helical membrane passes run 357–377 (TVDY…LVFL), 394–414 (GVGN…AIFF), 464–484 (LGGC…YYVL), 495–515 (FFLW…PILM), and 541–561 (MPMI…LYWL).

It belongs to the OXA1/ALB3/YidC family. Type 1 subfamily. As to quaternary structure, interacts with the Sec translocase complex via SecD. Specifically interacts with transmembrane segments of nascent integral membrane proteins during membrane integration.

It localises to the cell inner membrane. Required for the insertion and/or proper folding and/or complex formation of integral membrane proteins into the membrane. Involved in integration of membrane proteins that insert both dependently and independently of the Sec translocase complex, as well as at least some lipoproteins. Aids folding of multispanning membrane proteins. The protein is Membrane protein insertase YidC of Alcanivorax borkumensis (strain ATCC 700651 / DSM 11573 / NCIMB 13689 / SK2).